The sequence spans 544 residues: Methionine--tRNA ligase (544 aa).

The short motif at 10–20 is the 'HIGH' region element; sequence PYANGSLHLGH. Zn(2+) is bound by residues Cys-141, Cys-144, Cys-153, and Cys-156. The 'KMSKS' region signature appears at 329-333; the sequence is KLSTS. Position 332 (Thr-332) interacts with ATP.

Belongs to the class-I aminoacyl-tRNA synthetase family. MetG type 1 subfamily. As to quaternary structure, monomer. It depends on Zn(2+) as a cofactor.

Its subcellular location is the cytoplasm. The enzyme catalyses tRNA(Met) + L-methionine + ATP = L-methionyl-tRNA(Met) + AMP + diphosphate. In terms of biological role, is required not only for elongation of protein synthesis but also for the initiation of all mRNA translation through initiator tRNA(fMet) aminoacylation. The chain is Methionine--tRNA ligase from Bacillus cereus (strain Q1).